The primary structure comprises 155 residues: Ribosomal RNA large subunit methyltransferase H (155 aa).

S-adenosyl-L-methionine is bound by residues Leu-73, Gly-104, and 123 to 128; that span reads LSPLTL.

Belongs to the RNA methyltransferase RlmH family. In terms of assembly, homodimer.

The protein localises to the cytoplasm. It carries out the reaction pseudouridine(1915) in 23S rRNA + S-adenosyl-L-methionine = N(3)-methylpseudouridine(1915) in 23S rRNA + S-adenosyl-L-homocysteine + H(+). In terms of biological role, specifically methylates the pseudouridine at position 1915 (m3Psi1915) in 23S rRNA. In Pseudomonas savastanoi pv. phaseolicola (strain 1448A / Race 6) (Pseudomonas syringae pv. phaseolicola (strain 1448A / Race 6)), this protein is Ribosomal RNA large subunit methyltransferase H.